Here is a 2729-residue protein sequence, read N- to C-terminus: Protein NO VEIN (2729 aa).

Residues 1–27 (MQGNHDGSWSLHPSTNNGSGRANGNIN) are disordered. 2 consecutive short sequence motifs (nuclear localization signal) follow at residues 194 to 201 (KRKVDVLR) and 473 to 480 (MKRLGGSN). 2 disordered regions span residues 477–517 (GGSN…IPKL) and 2482–2515 (LPSS…DVTE). Basic and acidic residues-rich tracts occupy residues 488–497 (RNHEKSDSSK) and 2496–2515 (NTDD…DVTE).

As to expression, specifically expressed in developing embryos, leaf primordia, and shoot and root apical meristems.

The protein resides in the nucleus. In terms of biological role, essential protein required for cell fate determination during embryogenesis. Mediates auxin-dependent coordinated cell-fate specification and patterning in embryos (e.g. cotyledon outgrowth and separation), shoots and roots (e.g. leaf vascular development, cellular patterning and stem cell maintenance in the meristems). Required for provascular PIN1 expression and region-specific expression of PIN7 in leaf primordia, cell type-specific expression of PIN3, PIN4, and PIN7 in the root, and PIN2 polarity in the root cortex. The protein is Protein NO VEIN of Arabidopsis thaliana (Mouse-ear cress).